A 393-amino-acid polypeptide reads, in one-letter code: Transcription factor bHLH112 (393 aa).

Disordered stretches follow at residues 248 to 277 (TRAQ…SPLP) and 332 to 356 (KQGA…NENH). Residues 254 to 265 (SLKRAKDNESAA) are compositionally biased toward basic and acidic residues. The bHLH domain maps to 270–319 (VTTPSPLPTFKVRKENLRDQITSLQQLVSPFGKTDTASVLQEAIEYIKFL). Low complexity predominate over residues 332–347 (KQGASNQQQQQISGKS).

As to quaternary structure, homodimer.

The protein localises to the nucleus. The chain is Transcription factor bHLH112 (BHLH112) from Arabidopsis thaliana (Mouse-ear cress).